Here is a 154-residue protein sequence, read N- to C-terminus: Fimbrial protein (154 aa).

Positions 1–6 (MKAQKG) are cleaved as a propeptide — leader sequence. An N-methylphenylalanine modification is found at phenylalanine 7. The helical transmembrane segment at 7–27 (FTLIELMIVVAIIGILAAIAI) threads the bilayer. Residues cysteine 133 and cysteine 151 are joined by a disulfide bond.

This sequence belongs to the N-Me-Phe pilin family. In terms of assembly, the pili are polar flexible filaments of about 5.4 nanometers diameter and 2.5 micrometers average length; they consist of only a single polypeptide chain arranged in a helical configuration of five subunits per turn in the assembled pilus.

It localises to the fimbrium. The protein resides in the membrane. The sequence is that of Fimbrial protein (pilA) from Pseudomonas aeruginosa.